A 1014-amino-acid polypeptide reads, in one-letter code: Regulator of telomere elongation helicase 1 homolog (1014 aa).

Positions 7 to 308 constitute a Helicase ATP-binding domain; sequence RGVDVDFPYD…NSADKQFDPE (302 aa). An ATP-binding site is contributed by 42-49; it reads SPTGTGKT. Residues 70–85 are compositionally biased toward gly residues; sequence GGGGGGGGGGGGGGGS. Positions 70–106 are disordered; that stretch reads GGGGGGGGGGGGGGGSQQPPYGSQPSGSQHSGGSASQ. Low complexity predominate over residues 86-106; sequence QQPPYGSQPSGSQHSGGSASQ. Residues Cys149, Cys170, Cys175, and Cys211 each contribute to the [4Fe-4S] cluster site. Residues 255 to 258 carry the DEAH box motif; sequence DEAH. A disordered region spans residues 906-930; that stretch reads SSKKSNITHAPGNSGAIHEKSGGQE.

It belongs to the helicase family. RAD3/XPD subfamily.

Its subcellular location is the nucleus. The enzyme catalyses ATP + H2O = ADP + phosphate + H(+). Its function is as follows. A probable ATP-dependent DNA helicase implicated in DNA replication, DNA repair and the maintenance of genomic stability. Acts as an anti-recombinase to counteract toxic recombination and limit crossover during meiosis. Regulates meiotic recombination and crossover homeostasis by physically dissociating strand invasion events and thereby promotes noncrossover repair by meiotic synthesis dependent strand annealing (SDSA) as well as disassembly of D loop recombination intermediates. This chain is Regulator of telomere elongation helicase 1 homolog, found in Oryza sativa subsp. japonica (Rice).